A 315-amino-acid polypeptide reads, in one-letter code: tRNA dimethylallyltransferase (315 aa).

13–20 (GPTASGKT) is an ATP binding site. 15–20 (TASGKT) is a binding site for substrate. Interaction with substrate tRNA regions lie at residues 38-41 (DSAL), 162-166 (QRLSR), 243-248 (RCVGYR), and 276-283 (KRQITWLR).

The protein belongs to the IPP transferase family. As to quaternary structure, monomer. Mg(2+) serves as cofactor.

The enzyme catalyses adenosine(37) in tRNA + dimethylallyl diphosphate = N(6)-dimethylallyladenosine(37) in tRNA + diphosphate. Its function is as follows. Catalyzes the transfer of a dimethylallyl group onto the adenine at position 37 in tRNAs that read codons beginning with uridine, leading to the formation of N6-(dimethylallyl)adenosine (i(6)A). The chain is tRNA dimethylallyltransferase from Vibrio cholerae serotype O1 (strain ATCC 39541 / Classical Ogawa 395 / O395).